Here is a 180-residue protein sequence, read N- to C-terminus: ATP-dependent protease subunit HslV (180 aa).

The active site involves threonine 5. Na(+) contacts are provided by glycine 161, cysteine 164, and threonine 167.

This sequence belongs to the peptidase T1B family. HslV subfamily. As to quaternary structure, a double ring-shaped homohexamer of HslV is capped on each side by a ring-shaped HslU homohexamer. The assembly of the HslU/HslV complex is dependent on binding of ATP.

Its subcellular location is the cytoplasm. It catalyses the reaction ATP-dependent cleavage of peptide bonds with broad specificity.. With respect to regulation, allosterically activated by HslU binding. Its function is as follows. Protease subunit of a proteasome-like degradation complex believed to be a general protein degrading machinery. The polypeptide is ATP-dependent protease subunit HslV (Campylobacter jejuni subsp. doylei (strain ATCC BAA-1458 / RM4099 / 269.97)).